The primary structure comprises 487 residues: MAEVGKVLASDMELDHSNETKAVDDVVATTDKAEVIPVAVTRTETVVESLESTDCKELEKLVPHTVASQSEVDVASPVSEKAPKVSESSGALSLQSGSEGNSPFIREKVMEDGYNWRKYGQKLVKGNEFVRSYYRCTHPNCKAKKQLERSAGGQVVDTVYFGEHDHPKPLAGAVPINQDKRSDVFTAVSKGEQRIDIVSLIYKLCIVSYDIMFVEKTSGSSVQTLRQTEPPKIHGGLHVSVIPPADDVKTDISQSSRITGDNTHKDYNSPTAKRRKKGGNIELSPVERSTNDSRIVVHTQTLFDIVNDGYRWRKYGQKSVKGSPYPRSYYRCSSPGCPVKKHVERSSHDTKLLITTYEGKHDHDMPPGRVVTHNNMLDSEVDDKEGDANKTPQSSTLQSITKDQHVEDHLRKKTKTNGFEKSLDQGPVLDEKLKEEIKERSDANKDHAANHAKPEAKSDDKTTVCQEKAVGTLESEEQKPKTEPAQS.

The disordered stretch occupies residues Q69–F104. Phosphoserine is present on S76. A compositionally biased stretch (polar residues) spans S86 to N101. The WRKY 1 DNA-binding region spans I105–P169. C136, C141, H164, and H166 together coordinate Zn(2+). Residues S255 to E287 are disordered. Residues K273 to K277 carry the Nuclear localization signal motif. The segment at residues T301–P366 is a DNA-binding region (WRKY 2). Zn(2+) contacts are provided by C332, C337, H361, and H363. The disordered stretch occupies residues E380–S487. Over residues K390 to T401 the composition is skewed to polar residues. 2 stretches are compositionally biased toward basic and acidic residues: residues L429–T462 and E476–S487.

The protein belongs to the WRKY group I family. Expressed to similar levels in root and flower, to a somewhat lower level in stem and to low levels in leaf and siliques.

The protein resides in the nucleus. In terms of biological role, transcription factor. Binds to a 5'-CGTTGACCGAG-3' consensus core sequence which contains a W box, a frequently occurring elicitor-responsive cis-acting element. The sequence is that of WRKY transcription factor 1 from Arabidopsis thaliana (Mouse-ear cress).